We begin with the raw amino-acid sequence, 159 residues long: Putative ribosomal RNA large subunit methyltransferase H (159 aa).

Residues Leu76, Gly108, and 127-132 (FSKMTF) each bind S-adenosyl-L-methionine.

This sequence belongs to the RNA methyltransferase RlmH family.

It is found in the cytoplasm. It carries out the reaction pseudouridine(1915) in 23S rRNA + S-adenosyl-L-methionine = N(3)-methylpseudouridine(1915) in 23S rRNA + S-adenosyl-L-homocysteine + H(+). In terms of biological role, specifically methylates the pseudouridine at position 1915 (m3Psi1915) in 23S rRNA. This Methanococcus maripaludis (strain C7 / ATCC BAA-1331) protein is Putative ribosomal RNA large subunit methyltransferase H.